The chain runs to 321 residues: Methionyl-tRNA formyltransferase (321 aa).

(6S)-5,6,7,8-tetrahydrofolate is bound at residue 113 to 116 (SILP).

The protein belongs to the Fmt family.

It catalyses the reaction L-methionyl-tRNA(fMet) + (6R)-10-formyltetrahydrofolate = N-formyl-L-methionyl-tRNA(fMet) + (6S)-5,6,7,8-tetrahydrofolate + H(+). In terms of biological role, attaches a formyl group to the free amino group of methionyl-tRNA(fMet). The formyl group appears to play a dual role in the initiator identity of N-formylmethionyl-tRNA by promoting its recognition by IF2 and preventing the misappropriation of this tRNA by the elongation apparatus. This chain is Methionyl-tRNA formyltransferase, found in Vibrio atlanticus (strain LGP32) (Vibrio splendidus (strain Mel32)).